A 131-amino-acid chain; its full sequence is Large ribosomal subunit protein bL17 (131 aa).

Belongs to the bacterial ribosomal protein bL17 family. As to quaternary structure, part of the 50S ribosomal subunit. Contacts protein L32.

This chain is Large ribosomal subunit protein bL17, found in Paraburkholderia phymatum (strain DSM 17167 / CIP 108236 / LMG 21445 / STM815) (Burkholderia phymatum).